The primary structure comprises 806 residues: Glycerol-3-phosphate acyltransferase (806 aa).

The HXXXXD motif signature appears at 305–310 (CHRSHM).

Belongs to the GPAT/DAPAT family.

The protein localises to the cell inner membrane. The enzyme catalyses sn-glycerol 3-phosphate + an acyl-CoA = a 1-acyl-sn-glycero-3-phosphate + CoA. It functions in the pathway phospholipid metabolism; CDP-diacylglycerol biosynthesis; CDP-diacylglycerol from sn-glycerol 3-phosphate: step 1/3. This is Glycerol-3-phosphate acyltransferase from Salmonella paratyphi A (strain ATCC 9150 / SARB42).